The sequence spans 264 residues: Hydroxyethylthiazole kinase (264 aa).

Residue M41 coordinates substrate. Residues K117 and S163 each contribute to the ATP site. G190 provides a ligand contact to substrate.

It belongs to the Thz kinase family. Requires Mg(2+) as cofactor.

It catalyses the reaction 5-(2-hydroxyethyl)-4-methylthiazole + ATP = 4-methyl-5-(2-phosphooxyethyl)-thiazole + ADP + H(+). The protein operates within cofactor biosynthesis; thiamine diphosphate biosynthesis; 4-methyl-5-(2-phosphoethyl)-thiazole from 5-(2-hydroxyethyl)-4-methylthiazole: step 1/1. Functionally, catalyzes the phosphorylation of the hydroxyl group of 4-methyl-5-beta-hydroxyethylthiazole (THZ). The sequence is that of Hydroxyethylthiazole kinase from Thermoanaerobacter pseudethanolicus (strain ATCC 33223 / 39E) (Clostridium thermohydrosulfuricum).